A 237-amino-acid chain; its full sequence is Uridylate kinase (237 aa).

12–15 (KLSG) contributes to the ATP binding site. The involved in allosteric activation by GTP stretch occupies residues 20-25 (GDEGFG). Gly54 provides a ligand contact to UMP. Residues Gly55 and Arg59 each contribute to the ATP site. Residues Asp74 and 135–142 (TGSPFFTT) contribute to the UMP site. The ATP site is built by Thr162, Tyr168, and Asp171.

This sequence belongs to the UMP kinase family. As to quaternary structure, homohexamer.

The protein localises to the cytoplasm. It carries out the reaction UMP + ATP = UDP + ADP. It functions in the pathway pyrimidine metabolism; CTP biosynthesis via de novo pathway; UDP from UMP (UMPK route): step 1/1. Its activity is regulated as follows. Allosterically activated by GTP. Inhibited by UTP. Its function is as follows. Catalyzes the reversible phosphorylation of UMP to UDP. In Mannheimia succiniciproducens (strain KCTC 0769BP / MBEL55E), this protein is Uridylate kinase.